The chain runs to 180 residues: Crossover junction endodeoxyribonuclease RuvC (180 aa).

Active-site residues include Asp7, Glu66, and Asp138. Mg(2+) is bound by residues Asp7, Glu66, and Asp138.

It belongs to the RuvC family. In terms of assembly, homodimer which binds Holliday junction (HJ) DNA. The HJ becomes 2-fold symmetrical on binding to RuvC with unstacked arms; it has a different conformation from HJ DNA in complex with RuvA. In the full resolvosome a probable DNA-RuvA(4)-RuvB(12)-RuvC(2) complex forms which resolves the HJ. The cofactor is Mg(2+).

It localises to the cytoplasm. It catalyses the reaction Endonucleolytic cleavage at a junction such as a reciprocal single-stranded crossover between two homologous DNA duplexes (Holliday junction).. In terms of biological role, the RuvA-RuvB-RuvC complex processes Holliday junction (HJ) DNA during genetic recombination and DNA repair. Endonuclease that resolves HJ intermediates. Cleaves cruciform DNA by making single-stranded nicks across the HJ at symmetrical positions within the homologous arms, yielding a 5'-phosphate and a 3'-hydroxyl group; requires a central core of homology in the junction. The consensus cleavage sequence is 5'-(A/T)TT(C/G)-3'. Cleavage occurs on the 3'-side of the TT dinucleotide at the point of strand exchange. HJ branch migration catalyzed by RuvA-RuvB allows RuvC to scan DNA until it finds its consensus sequence, where it cleaves and resolves the cruciform DNA. This chain is Crossover junction endodeoxyribonuclease RuvC, found in Burkholderia thailandensis (strain ATCC 700388 / DSM 13276 / CCUG 48851 / CIP 106301 / E264).